A 163-amino-acid polypeptide reads, in one-letter code: MTKVLLGFMGVGKTTVSKHLSMHCKDMDAIIEAKIGMSIAAFFEQHGEIAFRTIENQVLKDLLFANDNSVIVTGGGVVVLQENRQLLRKNHQHNILLVASFETLYQRLKHDKKSQRPLFLKYSKEAFYEFYQQRMVFYEGLSDLVIRVDHRTPEEVANIIEGY.

Residue 10–15 (GVGKTT) coordinates ATP. Thr14 lines the Mg(2+) pocket. Substrate contacts are provided by Asp28, Arg52, and Gly75. Residue Arg116 coordinates ATP. Arg134 contributes to the substrate binding site. ATP is bound at residue Arg151.

The protein belongs to the shikimate kinase family. Monomer. The cofactor is Mg(2+).

It localises to the cytoplasm. It catalyses the reaction shikimate + ATP = 3-phosphoshikimate + ADP + H(+). The protein operates within metabolic intermediate biosynthesis; chorismate biosynthesis; chorismate from D-erythrose 4-phosphate and phosphoenolpyruvate: step 5/7. Functionally, catalyzes the specific phosphorylation of the 3-hydroxyl group of shikimic acid using ATP as a cosubstrate. This Streptococcus pyogenes serotype M49 (strain NZ131) protein is Shikimate kinase.